The sequence spans 67 residues: Protein AaeX (67 aa).

Helical transmembrane passes span 3-23 (LFPVIVIFGLSFPPIFFELLL) and 43-63 (FVWHPALFNTALYCCLFYLLS).

It belongs to the AaeX family.

It is found in the cell membrane. This chain is Protein AaeX, found in Cronobacter sakazakii (strain ATCC BAA-894) (Enterobacter sakazakii).